Reading from the N-terminus, the 283-residue chain is Bifunctional protein FolD (283 aa).

Residues 165-167 (GRS) and Ser190 each bind NADP(+).

This sequence belongs to the tetrahydrofolate dehydrogenase/cyclohydrolase family. In terms of assembly, homodimer.

The catalysed reaction is (6R)-5,10-methylene-5,6,7,8-tetrahydrofolate + NADP(+) = (6R)-5,10-methenyltetrahydrofolate + NADPH. The enzyme catalyses (6R)-5,10-methenyltetrahydrofolate + H2O = (6R)-10-formyltetrahydrofolate + H(+). Its pathway is one-carbon metabolism; tetrahydrofolate interconversion. Functionally, catalyzes the oxidation of 5,10-methylenetetrahydrofolate to 5,10-methenyltetrahydrofolate and then the hydrolysis of 5,10-methenyltetrahydrofolate to 10-formyltetrahydrofolate. This Paracidovorax citrulli (strain AAC00-1) (Acidovorax citrulli) protein is Bifunctional protein FolD.